A 272-amino-acid polypeptide reads, in one-letter code: Hydroxyethylthiazole kinase (272 aa).

Substrate is bound at residue M62. ATP contacts are provided by R138 and T183. G210 is a binding site for substrate.

Belongs to the Thz kinase family. Requires Mg(2+) as cofactor.

It catalyses the reaction 5-(2-hydroxyethyl)-4-methylthiazole + ATP = 4-methyl-5-(2-phosphooxyethyl)-thiazole + ADP + H(+). It participates in cofactor biosynthesis; thiamine diphosphate biosynthesis; 4-methyl-5-(2-phosphoethyl)-thiazole from 5-(2-hydroxyethyl)-4-methylthiazole: step 1/1. In terms of biological role, catalyzes the phosphorylation of the hydroxyl group of 4-methyl-5-beta-hydroxyethylthiazole (THZ). This is Hydroxyethylthiazole kinase from Dichelobacter nodosus (strain VCS1703A).